Here is a 225-residue protein sequence, read N- to C-terminus: Uracil-DNA glycosylase (225 aa).

Catalysis depends on Asp65, which acts as the Proton acceptor.

It belongs to the uracil-DNA glycosylase (UDG) superfamily. UNG family.

Its subcellular location is the cytoplasm. It carries out the reaction Hydrolyzes single-stranded DNA or mismatched double-stranded DNA and polynucleotides, releasing free uracil.. Its function is as follows. Excises uracil residues from the DNA which can arise as a result of misincorporation of dUMP residues by DNA polymerase or due to deamination of cytosine. The polypeptide is Uracil-DNA glycosylase (Bacillus cytotoxicus (strain DSM 22905 / CIP 110041 / 391-98 / NVH 391-98)).